The chain runs to 85 residues: Alpha-defensin 14 (85 aa).

Positions 1–11 (ALVLLAFQVQA) are cleaved as a signal peptide. Residues 12–50 (DPIQNTDEETKTEEQPGEDDQAVSVSFGDPEGSSLQEES) constitute a propeptide that is removed on maturation. The segment at 13-48 (PIQNTDEETKTEEQPGEDDQAVSVSFGDPEGSSLQE) is disordered. 3 disulfide bridges follow: Cys56–Cys84, Cys58–Cys73, and Cys63–Cys83.

The protein belongs to the alpha-defensin family. As to expression, paneth cells of the small bowel.

It is found in the secreted. Functionally, probably contributes to the antimicrobial barrier function of the small bowel mucosa. The protein is Alpha-defensin 14 (Defa14) of Mus musculus (Mouse).